A 221-amino-acid polypeptide reads, in one-letter code: GTP cyclohydrolase III (221 aa).

This sequence belongs to the archaeal-type GTP cyclohydrolase family.

The enzyme catalyses GTP + 3 H2O = 2-amino-5-formylamino-6-(5-phospho-D-ribosylamino)pyrimidin-4(3H)-one + 2 phosphate + 2 H(+). Catalyzes the formation of 2-amino-5-formylamino-6-ribofuranosylamino-4(3H)-pyrimidinone ribonucleotide monophosphate and inorganic phosphate from GTP. Also has an independent pyrophosphate phosphohydrolase activity. The sequence is that of GTP cyclohydrolase III from Pyrobaculum arsenaticum (strain DSM 13514 / JCM 11321 / PZ6).